Consider the following 662-residue polypeptide: UvrABC system protein B (662 aa).

Residues 25–182 (KGIEKGEKFQ…KKLVEIQYER (158 aa)) enclose the Helicase ATP-binding domain. 38 to 45 (GVTGSGKT) is an ATP binding site. The short motif at 91–114 (YYDYYQPEAYVAQSDTYIEKDASI) is the Beta-hairpin element. A Helicase C-terminal domain is found at 429-595 (QIDDLYTSIQ…TIIKDIREVI (167 aa)). The region spanning 622–657 (DKLIEKYEEEMKEAAQNLQFEKAAHLRDVIYKLKRD) is the UVR domain.

The protein belongs to the UvrB family. As to quaternary structure, forms a heterotetramer with UvrA during the search for lesions. Interacts with UvrC in an incision complex.

It localises to the cytoplasm. Functionally, the UvrABC repair system catalyzes the recognition and processing of DNA lesions. A damage recognition complex composed of 2 UvrA and 2 UvrB subunits scans DNA for abnormalities. Upon binding of the UvrA(2)B(2) complex to a putative damaged site, the DNA wraps around one UvrB monomer. DNA wrap is dependent on ATP binding by UvrB and probably causes local melting of the DNA helix, facilitating insertion of UvrB beta-hairpin between the DNA strands. Then UvrB probes one DNA strand for the presence of a lesion. If a lesion is found the UvrA subunits dissociate and the UvrB-DNA preincision complex is formed. This complex is subsequently bound by UvrC and the second UvrB is released. If no lesion is found, the DNA wraps around the other UvrB subunit that will check the other stand for damage. The polypeptide is UvrABC system protein B (Clostridium botulinum (strain Loch Maree / Type A3)).